The primary structure comprises 115 residues: Large ribosomal subunit protein bL19 (115 aa).

Belongs to the bacterial ribosomal protein bL19 family.

Its function is as follows. This protein is located at the 30S-50S ribosomal subunit interface and may play a role in the structure and function of the aminoacyl-tRNA binding site. The polypeptide is Large ribosomal subunit protein bL19 (Alkaliphilus oremlandii (strain OhILAs) (Clostridium oremlandii (strain OhILAs))).